We begin with the raw amino-acid sequence, 60 residues long: Large ribosomal subunit protein bL32 (60 aa).

Residues 1-16 (MAVPKKKTSKSRKNMR) are compositionally biased toward basic residues. Residues 1-20 (MAVPKKKTSKSRKNMRRAHD) form a disordered region.

It belongs to the bacterial ribosomal protein bL32 family.

This Geobacter metallireducens (strain ATCC 53774 / DSM 7210 / GS-15) protein is Large ribosomal subunit protein bL32.